A 37-amino-acid polypeptide reads, in one-letter code: Large ribosomal subunit protein bL36 (37 aa).

The protein belongs to the bacterial ribosomal protein bL36 family.

The chain is Large ribosomal subunit protein bL36 from Aliivibrio fischeri (strain ATCC 700601 / ES114) (Vibrio fischeri).